A 1138-amino-acid polypeptide reads, in one-letter code: Pesticidal crystal protein Cry7Aa (1138 aa).

Belongs to the delta endotoxin family.

In terms of biological role, promotes colloidosmotic lysis by binding to the midgut epithelial cells of Coleoptera. This protein is not toxic in its natural form. It is highly toxic to Colorado potato beetle larvae after an in vitro solubilization and trypsin activation step. This Bacillus thuringiensis protein is Pesticidal crystal protein Cry7Aa (cry7Aa).